A 189-amino-acid polypeptide reads, in one-letter code: Copper transport protein CTR2 (189 aa).

Topologically, residues M1 to T81 are cytoplasmic. A helical transmembrane segment spans residues L82–L102. The Vacuolar segment spans residues K103–G142. The chain crosses the membrane as a helical span at residues F143 to V163. Topologically, residues C164–H189 are cytoplasmic.

The protein belongs to the copper transporter (Ctr) (TC 1.A.56) family. SLC31A subfamily. Homomultimer.

The protein localises to the vacuole membrane. Provides bioavailable copper via mobilization of vacuolar copper stores and export to the cytoplasm. This Saccharomyces cerevisiae (strain ATCC 204508 / S288c) (Baker's yeast) protein is Copper transport protein CTR2 (CTR2).